The sequence spans 224 residues: Putative tyrosine-protein phosphatase OCA6 (224 aa).

T2 bears the Phosphothreonine mark. The Tyrosine-protein phosphatase domain occupies 8 to 170 (QFSTVQPNLY…FNSEIEVDDL (163 aa)). Catalysis depends on C114, which acts as the Phosphocysteine intermediate.

This sequence belongs to the protein-tyrosine phosphatase family.

It is found in the cytoplasm. The catalysed reaction is O-phospho-L-tyrosyl-[protein] + H2O = L-tyrosyl-[protein] + phosphate. Required for replication of Brome mosaic virus (BMV). In Saccharomyces cerevisiae (strain ATCC 204508 / S288c) (Baker's yeast), this protein is Putative tyrosine-protein phosphatase OCA6 (OCA6).